Reading from the N-terminus, the 627-residue chain is Asparagine synthetase domain-containing protein 1 (627 aa).

Catalysis depends on Cys2, which acts as the For GATase activity. The Glutamine amidotransferase type-2 domain maps to 2–184 (CGICCSVSFS…ASGIFQIDLN (183 aa)). Residues 308–597 (ASKEVLKTCS…GLPASALLPK (290 aa)) form the Asparagine synthetase domain. The disordered stretch occupies residues 373-404 (QQNHHEIPSEESSQSPAADEGPGEAEVPDRVT).

The protein is Asparagine synthetase domain-containing protein 1 (Asnsd1) of Mus musculus (Mouse).